The primary structure comprises 250 residues: tRNA (guanine-N(1)-)-methyltransferase (250 aa).

S-adenosyl-L-methionine-binding positions include glycine 116 and 136–141 (IGDYVL).

The protein belongs to the RNA methyltransferase TrmD family. As to quaternary structure, homodimer.

It localises to the cytoplasm. The catalysed reaction is guanosine(37) in tRNA + S-adenosyl-L-methionine = N(1)-methylguanosine(37) in tRNA + S-adenosyl-L-homocysteine + H(+). Its function is as follows. Specifically methylates guanosine-37 in various tRNAs. This chain is tRNA (guanine-N(1)-)-methyltransferase, found in Pseudomonas putida (strain ATCC 700007 / DSM 6899 / JCM 31910 / BCRC 17059 / LMG 24140 / F1).